A 949-amino-acid chain; its full sequence is uncharacterized protein (949 aa).

Positions Leu-64 to Leu-170 constitute a Calponin-homology (CH) domain.

It is found in the nucleus. This is an uncharacterized protein from Schizosaccharomyces pombe (strain 972 / ATCC 24843) (Fission yeast).